Here is a 1881-residue protein sequence, read N- to C-terminus: Endoribonuclease Dicer-S (1881 aa).

In terms of domain architecture, Helicase ATP-binding spans 41 to 217 (LLEAALDHNI…DLEEKIQNLE (177 aa)). 54-61 (LNSGSGKT) provides a ligand contact to ATP. Positions 165–168 (DECH) match the DECH box motif. Residues 425–594 (SFPSPFTNIL…SMDCGNTESE (170 aa)) enclose the Helicase C-terminal domain. The Dicer dsRNA-binding fold domain maps to 622–714 (AIGHINRYCA…MPVGKETVKY (93 aa)). The region spanning 887–1034 (KFVEDIEKSE…LVPELCAIHP (148 aa)) is the PAZ domain. 2 RNase III domains span residues 1249-1380 (TSDI…ETSG) and 1625-1783 (FENF…MDSG). Mg(2+)-binding residues include Glu-1293, Asp-1371, Glu-1374, Glu-1664, Asp-1769, and Glu-1772. Residues 1808-1873 (VPRSPVRELL…ARRALRSLKA (66 aa)) enclose the DRBM domain.

Belongs to the helicase family. Dicer subfamily. Component of the RISC loading complex (RLC), or micro-RNA (miRNA) loading complex (miRLC), which is composed of dicer1, ago2 and tarbp2; dicer1 and tarbp2 are required to process precursor miRNAs (pre-miRNAs) to mature miRNAs and then load them onto ago2. Note that the trimeric RLC/miRLC is also referred to as RISC. Mg(2+) serves as cofactor. The cofactor is Mn(2+).

Its subcellular location is the cytoplasm. It carries out the reaction Endonucleolytic cleavage to 5'-phosphomonoester.. Functionally, double-stranded RNA (dsRNA) endoribonuclease playing a central role in short dsRNA-mediated post-transcriptional gene silencing. Cleaves naturally occurring long dsRNAs and short hairpin pre-microRNAs (miRNA) into fragments of twenty-one to twenty-three nucleotides with 3' overhang of two nucleotides, producing respectively short interfering RNAs (siRNA) and mature microRNAs. SiRNAs and miRNAs serve as guide to direct the RNA-induced silencing complex (RISC) to complementary RNAs to degrade them or prevent their translation. Gene silencing mediated by siRNAs, also called RNA interference, controls the elimination of transcripts from mobile and repetitive DNA elements of the genome but also the degradation of exogenous RNA of viral origin for instance. The miRNA pathway on the other side is a mean to specifically regulate the expression of target genes. During embryonic development, at the left-right organizer, post-transcriptionally regulates the expression of dand5 in flow sensor cells. In post-flow stages, acts along with Bicc1 to repress dand5 mRNA translation and decay. Decreased Dand5 expression lifts repression of Nodal and defines leftness by induction of the lateral plate mesoderm Nodal signaling cascade. This Xenopus laevis (African clawed frog) protein is Endoribonuclease Dicer-S (dicer1.S).